Consider the following 287-residue polypeptide: Co-chaperone protein DjlA (287 aa).

Residues 1-6 (MQIFGK) are Periplasmic-facing. A helical membrane pass occupies residues 7–30 (ILGAFFGFLFGGVFGALFGLFIGH). The Cytoplasmic portion of the chain corresponds to 31–287 (QFDKARRLSQ…DLIKKEKGFK (257 aa)). The tract at residues 192–213 (GGFGGQQHQSHHSSSHGGWQQA) is disordered. The J domain maps to 221–287 (DAYKILGIDA…DLIKKEKGFK (67 aa)).

In terms of assembly, homodimer.

The protein resides in the cell inner membrane. Regulatory DnaK co-chaperone. Direct interaction between DnaK and DjlA is needed for the induction of the wcaABCDE operon, involved in the synthesis of a colanic acid polysaccharide capsule, possibly through activation of the RcsB/RcsC phosphotransfer signaling pathway. The colanic acid capsule may help the bacterium survive conditions outside the host. In Vibrio vulnificus (strain YJ016), this protein is Co-chaperone protein DjlA.